We begin with the raw amino-acid sequence, 476 residues long: Glutamyl-tRNA(Gln) amidotransferase subunit A (476 aa).

Residues Lys70 and Ser145 each act as charge relay system in the active site. The Acyl-ester intermediate role is filled by Ser169.

Belongs to the amidase family. GatA subfamily. As to quaternary structure, heterotrimer of A, B and C subunits.

The enzyme catalyses L-glutamyl-tRNA(Gln) + L-glutamine + ATP + H2O = L-glutaminyl-tRNA(Gln) + L-glutamate + ADP + phosphate + H(+). Its function is as follows. Allows the formation of correctly charged Gln-tRNA(Gln) through the transamidation of misacylated Glu-tRNA(Gln) in organisms which lack glutaminyl-tRNA synthetase. The reaction takes place in the presence of glutamine and ATP through an activated gamma-phospho-Glu-tRNA(Gln). This chain is Glutamyl-tRNA(Gln) amidotransferase subunit A, found in Methanosarcina mazei (strain ATCC BAA-159 / DSM 3647 / Goe1 / Go1 / JCM 11833 / OCM 88) (Methanosarcina frisia).